A 426-amino-acid polypeptide reads, in one-letter code: Serine--tRNA ligase (426 aa).

230-232 (TAE) is a binding site for L-serine. 261–263 (RSE) contributes to the ATP binding site. E284 is an L-serine binding site. 348–351 (EISS) provides a ligand contact to ATP. S384 contributes to the L-serine binding site.

The protein belongs to the class-II aminoacyl-tRNA synthetase family. Type-1 seryl-tRNA synthetase subfamily. Homodimer. The tRNA molecule binds across the dimer.

It localises to the cytoplasm. The enzyme catalyses tRNA(Ser) + L-serine + ATP = L-seryl-tRNA(Ser) + AMP + diphosphate + H(+). It catalyses the reaction tRNA(Sec) + L-serine + ATP = L-seryl-tRNA(Sec) + AMP + diphosphate + H(+). Its pathway is aminoacyl-tRNA biosynthesis; selenocysteinyl-tRNA(Sec) biosynthesis; L-seryl-tRNA(Sec) from L-serine and tRNA(Sec): step 1/1. Functionally, catalyzes the attachment of serine to tRNA(Ser). Is also able to aminoacylate tRNA(Sec) with serine, to form the misacylated tRNA L-seryl-tRNA(Sec), which will be further converted into selenocysteinyl-tRNA(Sec). This is Serine--tRNA ligase from Erythrobacter litoralis (strain HTCC2594).